Consider the following 176-residue polypeptide: dCTP deaminase (176 aa).

DCTP contacts are provided by residues 99-104 (RSTLAR) and Asp115. Residue Glu125 is the Proton donor/acceptor of the active site. Residue Gln163 coordinates dCTP.

This sequence belongs to the dCTP deaminase family. As to quaternary structure, homotrimer.

The catalysed reaction is dCTP + H2O + H(+) = dUTP + NH4(+). It functions in the pathway pyrimidine metabolism; dUMP biosynthesis; dUMP from dCTP (dUTP route): step 1/2. In terms of biological role, catalyzes the deamination of dCTP to dUTP. In Pyrobaculum calidifontis (strain DSM 21063 / JCM 11548 / VA1), this protein is dCTP deaminase.